A 170-amino-acid polypeptide reads, in one-letter code: ATP synthase subunit b (170 aa).

Residues 25-45 (LIPNGTFFAVLIIFLIVLGVI) traverse the membrane as a helical segment. A disordered region spans residues 121 to 147 (EVAQTLTQADQQLSAQGDQVRSGLESS). Residues 122-139 (VAQTLTQADQQLSAQGDQ) show a composition bias toward polar residues.

The protein belongs to the ATPase B chain family. As to quaternary structure, F-type ATPases have 2 components, F(1) - the catalytic core - and F(0) - the membrane proton channel. F(1) has five subunits: alpha(3), beta(3), gamma(1), delta(1), epsilon(1). F(0) has three main subunits: a(1), b(2) and c(10-14). The alpha and beta chains form an alternating ring which encloses part of the gamma chain. F(1) is attached to F(0) by a central stalk formed by the gamma and epsilon chains, while a peripheral stalk is formed by the delta and b chains.

Its subcellular location is the cell membrane. Functionally, f(1)F(0) ATP synthase produces ATP from ADP in the presence of a proton or sodium gradient. F-type ATPases consist of two structural domains, F(1) containing the extramembraneous catalytic core and F(0) containing the membrane proton channel, linked together by a central stalk and a peripheral stalk. During catalysis, ATP synthesis in the catalytic domain of F(1) is coupled via a rotary mechanism of the central stalk subunits to proton translocation. In terms of biological role, component of the F(0) channel, it forms part of the peripheral stalk, linking F(1) to F(0). The chain is ATP synthase subunit b from Mycolicibacterium smegmatis (strain ATCC 700084 / mc(2)155) (Mycobacterium smegmatis).